The following is a 348-amino-acid chain: Phosphate acyltransferase (348 aa).

It belongs to the PlsX family. As to quaternary structure, homodimer. Probably interacts with PlsY.

The protein resides in the cytoplasm. The enzyme catalyses a fatty acyl-[ACP] + phosphate = an acyl phosphate + holo-[ACP]. The protein operates within lipid metabolism; phospholipid metabolism. Catalyzes the reversible formation of acyl-phosphate (acyl-PO(4)) from acyl-[acyl-carrier-protein] (acyl-ACP). This enzyme utilizes acyl-ACP as fatty acyl donor, but not acyl-CoA. The protein is Phosphate acyltransferase of Nitrosomonas europaea (strain ATCC 19718 / CIP 103999 / KCTC 2705 / NBRC 14298).